A 447-amino-acid polypeptide reads, in one-letter code: Glucose-6-phosphate isomerase (447 aa).

E288 serves as the catalytic Proton donor. Active-site residues include H309 and K423.

The protein belongs to the GPI family.

Its subcellular location is the cytoplasm. The enzyme catalyses alpha-D-glucose 6-phosphate = beta-D-fructose 6-phosphate. It functions in the pathway carbohydrate biosynthesis; gluconeogenesis. It participates in carbohydrate degradation; glycolysis; D-glyceraldehyde 3-phosphate and glycerone phosphate from D-glucose: step 2/4. In terms of biological role, catalyzes the reversible isomerization of glucose-6-phosphate to fructose-6-phosphate. This Lactobacillus gasseri (strain ATCC 33323 / DSM 20243 / BCRC 14619 / CIP 102991 / JCM 1131 / KCTC 3163 / NCIMB 11718 / NCTC 13722 / AM63) protein is Glucose-6-phosphate isomerase.